Consider the following 365-residue polypeptide: Phosphoserine aminotransferase (365 aa).

Residue R40 participates in L-glutamate binding. Pyridoxal 5'-phosphate-binding positions include 74 to 75 (AS), F99, T155, D177, and Q200. K201 is subject to N6-(pyridoxal phosphate)lysine. 241–242 (NT) provides a ligand contact to pyridoxal 5'-phosphate.

This sequence belongs to the class-V pyridoxal-phosphate-dependent aminotransferase family. SerC subfamily. Homodimer. It depends on pyridoxal 5'-phosphate as a cofactor.

The protein resides in the cytoplasm. It carries out the reaction O-phospho-L-serine + 2-oxoglutarate = 3-phosphooxypyruvate + L-glutamate. The enzyme catalyses 4-(phosphooxy)-L-threonine + 2-oxoglutarate = (R)-3-hydroxy-2-oxo-4-phosphooxybutanoate + L-glutamate. It functions in the pathway amino-acid biosynthesis; L-serine biosynthesis; L-serine from 3-phospho-D-glycerate: step 2/3. In terms of biological role, catalyzes the reversible conversion of 3-phosphohydroxypyruvate to phosphoserine and of 3-hydroxy-2-oxo-4-phosphonooxybutanoate to phosphohydroxythreonine. This Lactococcus lactis subsp. lactis (strain IL1403) (Streptococcus lactis) protein is Phosphoserine aminotransferase.